A 521-amino-acid polypeptide reads, in one-letter code: 4-cresol dehydrogenase [hydroxylating] flavoprotein subunit (521 aa).

Residues 54–268 (AAHAPSAAVT…VEIVDALRPL (215 aa)) form the FAD-binding PCMH-type domain. Residue Tyr384 is modified to O-8alpha-FAD tyrosine.

As to quaternary structure, tetramer of two cytochrome subunits and two flavoprotein subunits. FAD serves as cofactor.

The catalysed reaction is 4-methylphenol + 4 oxidized [azurin] + H2O = 4 reduced [azurin] + 4-hydroxybenzaldehyde + 4 H(+). It functions in the pathway aromatic compound metabolism; p-cresol degradation. Catalyzes the azurin dependent hydroxylation of the methyl group of 4-methylphenol to form 4-hydroxybenzaldehyde. The sequence is that of 4-cresol dehydrogenase [hydroxylating] flavoprotein subunit (pchF) from Pseudomonas putida (Arthrobacter siderocapsulatus).